Reading from the N-terminus, the 227-residue chain is Cytochrome c oxidase subunit 2 (227 aa).

Residues 1 to 14 (MAHSFQLGFQDATS) are Mitochondrial intermembrane-facing. A helical transmembrane segment spans residues 15 to 45 (PIMEELLHFHDHTLMIVFLISSLVLYIITLM). The Mitochondrial matrix segment spans residues 46-59 (LTTKLTHTSTMDAQ). Residues 60-87 (EVETVWTILPAIILILIALPSLRILYLM) form a helical membrane-spanning segment. Residues 88-227 (DEINTPSLTV…HFENWSTSMI (140 aa)) lie on the Mitochondrial intermembrane side of the membrane. Cu cation is bound by residues His-161, Cys-196, Glu-198, Cys-200, His-204, and Met-207. Residue Glu-198 participates in Mg(2+) binding.

Belongs to the cytochrome c oxidase subunit 2 family. Component of the cytochrome c oxidase (complex IV, CIV), a multisubunit enzyme composed of 14 subunits. The complex is composed of a catalytic core of 3 subunits MT-CO1, MT-CO2 and MT-CO3, encoded in the mitochondrial DNA, and 11 supernumerary subunits COX4I, COX5A, COX5B, COX6A, COX6B, COX6C, COX7A, COX7B, COX7C, COX8 and NDUFA4, which are encoded in the nuclear genome. The complex exists as a monomer or a dimer and forms supercomplexes (SCs) in the inner mitochondrial membrane with NADH-ubiquinone oxidoreductase (complex I, CI) and ubiquinol-cytochrome c oxidoreductase (cytochrome b-c1 complex, complex III, CIII), resulting in different assemblies (supercomplex SCI(1)III(2)IV(1) and megacomplex MCI(2)III(2)IV(2)). Found in a complex with TMEM177, COA6, COX18, COX20, SCO1 and SCO2. Interacts with TMEM177 in a COX20-dependent manner. Interacts with COX20. Interacts with COX16. It depends on Cu cation as a cofactor.

Its subcellular location is the mitochondrion inner membrane. It carries out the reaction 4 Fe(II)-[cytochrome c] + O2 + 8 H(+)(in) = 4 Fe(III)-[cytochrome c] + 2 H2O + 4 H(+)(out). In terms of biological role, component of the cytochrome c oxidase, the last enzyme in the mitochondrial electron transport chain which drives oxidative phosphorylation. The respiratory chain contains 3 multisubunit complexes succinate dehydrogenase (complex II, CII), ubiquinol-cytochrome c oxidoreductase (cytochrome b-c1 complex, complex III, CIII) and cytochrome c oxidase (complex IV, CIV), that cooperate to transfer electrons derived from NADH and succinate to molecular oxygen, creating an electrochemical gradient over the inner membrane that drives transmembrane transport and the ATP synthase. Cytochrome c oxidase is the component of the respiratory chain that catalyzes the reduction of oxygen to water. Electrons originating from reduced cytochrome c in the intermembrane space (IMS) are transferred via the dinuclear copper A center (CU(A)) of subunit 2 and heme A of subunit 1 to the active site in subunit 1, a binuclear center (BNC) formed by heme A3 and copper B (CU(B)). The BNC reduces molecular oxygen to 2 water molecules using 4 electrons from cytochrome c in the IMS and 4 protons from the mitochondrial matrix. This chain is Cytochrome c oxidase subunit 2 (MT-CO2), found in Cephalopachus bancanus (Western tarsier).